The primary structure comprises 440 residues: Chromosome partition protein MukF (440 aa).

Positions 208–236 are leucine-zipper; that stretch reads LSETSGTLRELQDTLEAAGDKLQANLLRI.

Belongs to the MukF family. As to quaternary structure, interacts, and probably forms a ternary complex, with MukE and MukB via its C-terminal region. The complex formation is stimulated by calcium or magnesium. It is required for an interaction between MukE and MukB.

The protein resides in the cytoplasm. It localises to the nucleoid. In terms of biological role, involved in chromosome condensation, segregation and cell cycle progression. May participate in facilitating chromosome segregation by condensation DNA from both sides of a centrally located replisome during cell division. Not required for mini-F plasmid partitioning. Probably acts via its interaction with MukB and MukE. Overexpression results in anucleate cells. It has a calcium binding activity. This chain is Chromosome partition protein MukF, found in Escherichia coli O9:H4 (strain HS).